The primary structure comprises 914 residues: Chitin synthase B (914 aa).

Disordered stretches follow at residues 1–67 (MAYQ…TSGY) and 112–140 (YARSETSSTEAWRQRQAPGGAGSGGGGGL). Positions 130-140 (GGAGSGGGGGL) are enriched in gly residues. A run of 7 helical transmembrane segments spans residues 543-562 (WLNGSFAAGIYSLMHFGRMY), 586-606 (ILTWFSLASYWLTTSVIMDLV), 627-647 (IVNTIVKYAYLGFLLLQFILA), 662-682 (SFVVFGIIQLYVVVDALYLVV), 712-732 (AGIIIIALAATFGLYFVASFM), 843-863 (LVTFWIFSNALMAVCITSDGV), and 882-902 (ALLWSNAVVALFRFIGACWFL).

It belongs to the chitin synthase family. Class III subfamily.

It is found in the cell membrane. The enzyme catalyses [(1-&gt;4)-N-acetyl-beta-D-glucosaminyl](n) + UDP-N-acetyl-alpha-D-glucosamine = [(1-&gt;4)-N-acetyl-beta-D-glucosaminyl](n+1) + UDP + H(+). In terms of biological role, polymerizes chitin, a structural polymer of the cell wall and septum, by transferring the sugar moiety of UDP-GlcNAc to the non-reducing end of the growing chitin polymer. Plays an important role in septal growth or maintenance. Mediates colony spore formation. The chain is Chitin synthase B from Aspergillus niger (strain ATCC MYA-4892 / CBS 513.88 / FGSC A1513).